The following is a 169-amino-acid chain: Transcription antitermination protein NusB (169 aa).

Residues Met-1–Arg-23 form a disordered region.

Belongs to the NusB family.

Its function is as follows. Involved in transcription antitermination. Required for transcription of ribosomal RNA (rRNA) genes. Binds specifically to the boxA antiterminator sequence of the ribosomal RNA (rrn) operons. The polypeptide is Transcription antitermination protein NusB (Rhodopseudomonas palustris (strain HaA2)).